We begin with the raw amino-acid sequence, 209 residues long: Uracil phosphoribosyltransferase (209 aa).

5-phospho-alpha-D-ribose 1-diphosphate contacts are provided by residues Arg78, Arg103, and 130–138 (DPMLATAGS). Uracil-binding positions include Ile193 and 198-200 (GDA). Asp199 lines the 5-phospho-alpha-D-ribose 1-diphosphate pocket.

It belongs to the UPRTase family. Mg(2+) serves as cofactor.

It catalyses the reaction UMP + diphosphate = 5-phospho-alpha-D-ribose 1-diphosphate + uracil. It participates in pyrimidine metabolism; UMP biosynthesis via salvage pathway; UMP from uracil: step 1/1. Allosterically activated by GTP. Functionally, catalyzes the conversion of uracil and 5-phospho-alpha-D-ribose 1-diphosphate (PRPP) to UMP and diphosphate. In Methylibium petroleiphilum (strain ATCC BAA-1232 / LMG 22953 / PM1), this protein is Uracil phosphoribosyltransferase.